Consider the following 57-residue polypeptide: Non-structural protein 3a (57 aa).

An N-terminal signal peptide occupies residues 1 to 22 (MIQSPTSFLIVLILLWCKLVLS).

Its function is as follows. Involved in resistance to IFN. The sequence is that of Non-structural protein 3a from Avian infectious bronchitis virus (strain Portugal/322/82) (IBV).